Consider the following 408-residue polypeptide: Argininosuccinate synthase (408 aa).

ATP is bound at residue 14–22 (AYSGGLDTS). L-citrulline is bound by residues tyrosine 92 and serine 97. An ATP-binding site is contributed by glycine 122. Residues threonine 124, asparagine 128, and aspartate 129 each coordinate L-aspartate. Asparagine 128 lines the L-citrulline pocket. Residues arginine 132, serine 181, serine 190, glutamate 266, and tyrosine 278 each contribute to the L-citrulline site.

Belongs to the argininosuccinate synthase family. Type 1 subfamily. Homotetramer.

It is found in the cytoplasm. It catalyses the reaction L-citrulline + L-aspartate + ATP = 2-(N(omega)-L-arginino)succinate + AMP + diphosphate + H(+). It functions in the pathway amino-acid biosynthesis; L-arginine biosynthesis; L-arginine from L-ornithine and carbamoyl phosphate: step 2/3. The protein is Argininosuccinate synthase of Moorella thermoacetica (strain ATCC 39073 / JCM 9320).